Reading from the N-terminus, the 2242-residue chain is Large tegument protein deneddylase (2242 aa).

The tract at residues 1–238 (MKVTQASCHQ…IDLTGVVRES (238 aa)) is deubiquitination activity. The Peptidase C76 domain occupies 4-226 (TQASCHQGDI…AARLVSTYRD (223 aa)). Catalysis depends on residues cysteine 24, aspartate 160, and histidine 162. The segment at 239-318 (ADTAATTTTA…KTLATASSSS (80 aa)) is disordered. Over residues 240–250 (DTAATTTTAAP) the composition is skewed to low complexity. The segment covering 251–268 (SLPPLPDPIVDPGCPPGV) has biased composition (pro residues). The span at 304–318 (PSTTSKTLATASSSS) shows a compositional bias: low complexity. Positions 328-332 (SSAVP) are interaction with inner tegument protein. Residues 1173–1190 (SQQKMEGQLQETRQQMTE) show a composition bias toward polar residues. The segment at 1173–1229 (SQQKMEGQLQETRQQMTETSERLDRSLRQDPGSSSVTRVPEKPFKGQELAGRITPPP) is disordered. Positions 1191–1200 (TSERLDRSLR) are enriched in basic and acidic residues.

It belongs to the herpesviridae large tegument protein family. As to quaternary structure, interacts with host CUL1 and CUL4A; these interactions inhibit the E3 ligase activity of cullins. Interacts with inner tegument protein. Interacts with capsid vertex specific component CVC2. Interacts with the major capsid protein/MCP.

The protein resides in the virion tegument. It localises to the host cytoplasm. The protein localises to the host nucleus. It catalyses the reaction Thiol-dependent hydrolysis of ester, thioester, amide, peptide and isopeptide bonds formed by the C-terminal Gly of ubiquitin (a 76-residue protein attached to proteins as an intracellular targeting signal).. In terms of biological role, large tegument protein that plays multiple roles in the viral cycle. During viral entry, remains associated with the capsid while most of the tegument is detached and participates in the capsid transport toward the host nucleus. Plays a role in the routing of the capsid at the nuclear pore complex and subsequent uncoating. Within the host nucleus, acts as a deneddylase and promotes the degradation of nuclear CRLs (cullin-RING ubiquitin ligases) and thereby stabilizes nuclear CRL substrates, while cytoplasmic CRLs remain unaffected. These modifications prevent host cell cycle S-phase progression and create a favorable environment allowing efficient viral genome replication. Participates later in the secondary envelopment of capsids. Indeed, plays a linker role for the association of the outer viral tegument to the capsids together with the inner tegument protein. The protein is Large tegument protein deneddylase of Homo sapiens (Human).